The chain runs to 176 residues: NAD(P)H-quinone oxidoreductase subunit 6, chloroplastic (176 aa).

The next 5 membrane-spanning stretches (helical) occupy residues 10 to 30 (FLLVFFGSGLILGGLGVILFT), 33 to 53 (IFSAFSLGLVLVCISLFYIIA), 61 to 81 (AQLLIYVGAINVLIIFAVMFI), 92 to 112 (LFTLGDGMTLVICTGIFFLLI), and 152 to 172 (FFPPFELISIILLVALIGAIA).

The protein belongs to the complex I subunit 6 family. As to quaternary structure, NDH is composed of at least 16 different subunits, 5 of which are encoded in the nucleus.

It localises to the plastid. The protein localises to the chloroplast thylakoid membrane. The catalysed reaction is a plastoquinone + NADH + (n+1) H(+)(in) = a plastoquinol + NAD(+) + n H(+)(out). The enzyme catalyses a plastoquinone + NADPH + (n+1) H(+)(in) = a plastoquinol + NADP(+) + n H(+)(out). Functionally, NDH shuttles electrons from NAD(P)H:plastoquinone, via FMN and iron-sulfur (Fe-S) centers, to quinones in the photosynthetic chain and possibly in a chloroplast respiratory chain. The immediate electron acceptor for the enzyme in this species is believed to be plastoquinone. Couples the redox reaction to proton translocation, and thus conserves the redox energy in a proton gradient. In Fagopyrum esculentum subsp. ancestrale (Wild buckwheat), this protein is NAD(P)H-quinone oxidoreductase subunit 6, chloroplastic (ndhG).